We begin with the raw amino-acid sequence, 787 residues long: Phenylalanine--tRNA ligase beta subunit (787 aa).

Residues A39–R149 enclose the tRNA-binding domain. The region spanning P400–D475 is the B5 domain. The Mg(2+) site is built by D453, D459, E462, and E463. The FDX-ACB domain maps to S694–R786.

It belongs to the phenylalanyl-tRNA synthetase beta subunit family. Type 1 subfamily. In terms of assembly, tetramer of two alpha and two beta subunits. The cofactor is Mg(2+).

The protein resides in the cytoplasm. The enzyme catalyses tRNA(Phe) + L-phenylalanine + ATP = L-phenylalanyl-tRNA(Phe) + AMP + diphosphate + H(+). This chain is Phenylalanine--tRNA ligase beta subunit (pheT), found in Neisseria meningitidis serogroup B (strain ATCC BAA-335 / MC58).